The sequence spans 1020 residues: Tetrathionate reductase subunit A (1020 aa).

The segment at residues 1-33 (MANLTRRQWLKVGLAVGGMVTFGLSYRDVAKRA) is a signal peptide (tat-type signal). Residues 71–154 (QTIAMTQCFG…TLLESLYSPL (84 aa)) enclose the 4Fe-4S Mo/W bis-MGD-type domain. Positions 78, 81, 85, and 140 each coordinate [4Fe-4S] cluster.

This sequence belongs to the prokaryotic molybdopterin-containing oxidoreductase family. Probably composed of three subunits: TtrA, TtrB and TtrC. [4Fe-4S] cluster serves as cofactor. Requires Mo-bis(molybdopterin guanine dinucleotide) as cofactor. Predicted to be exported by the Tat system. The position of the signal peptide cleavage has not been experimentally proven.

It localises to the periplasm. The protein localises to the cell inner membrane. Its function is as follows. Part of a membrane-bound tetrathionate reductase that catalyzes the reduction of tetrathionate to thiosulfate. TtrA is the catalytic subunit. During mice infection, the ability to use tetrathionate as an electron acceptor is a growth advantage for S.typhimurium over the competing microbiota in the lumen of the inflamed gut. The chain is Tetrathionate reductase subunit A (ttrA) from Salmonella typhimurium (strain LT2 / SGSC1412 / ATCC 700720).